The sequence spans 1068 residues: Carbamoyl phosphate synthase large chain (1068 aa).

The tract at residues 1–401 (MPLNKDIKKV…AFLKGTRSLE (401 aa)) is carboxyphosphate synthetic domain. Positions 129, 169, 175, 176, 208, 210, 215, 241, 242, 243, 284, and 298 each coordinate ATP. The region spanning 133–327 (RNVMSRINEP…IAKVASKIAL (195 aa)) is the ATP-grasp 1 domain. Residues Gln284, Glu298, and Asn300 each coordinate Mg(2+). Mn(2+) is bound by residues Gln284, Glu298, and Asn300. Residues 402-549 (IGKYSLEHKK…YSTYDVYDEV (148 aa)) are oligomerization domain. The carbamoyl phosphate synthetic domain stretch occupies residues 550-932 (EVSKNKKVIV…ALYKGFIGAN (383 aa)). Residues 674-864 (DELLEKLKIA…IVDIATRVML (191 aa)) enclose the ATP-grasp 2 domain. ATP contacts are provided by Arg710, Lys749, Leu751, Glu755, Gly780, Val781, His782, Ser783, Gln823, and Glu835. Mg(2+)-binding residues include Gln823, Glu835, and Asn837. The Mn(2+) site is built by Gln823, Glu835, and Asn837. One can recognise an MGS-like domain in the interval 933–1068 (ISIKKEKGTV…ETLYIFDLSN (136 aa)). Residues 933 to 1068 (ISIKKEKGTV…ETLYIFDLSN (136 aa)) form an allosteric domain region.

Belongs to the CarB family. Composed of two chains; the small (or glutamine) chain promotes the hydrolysis of glutamine to ammonia, which is used by the large (or ammonia) chain to synthesize carbamoyl phosphate. Tetramer of heterodimers (alpha,beta)4. Mg(2+) is required as a cofactor. Mn(2+) serves as cofactor.

It carries out the reaction hydrogencarbonate + L-glutamine + 2 ATP + H2O = carbamoyl phosphate + L-glutamate + 2 ADP + phosphate + 2 H(+). The catalysed reaction is hydrogencarbonate + NH4(+) + 2 ATP = carbamoyl phosphate + 2 ADP + phosphate + 2 H(+). Its pathway is amino-acid biosynthesis; L-arginine biosynthesis; carbamoyl phosphate from bicarbonate: step 1/1. It participates in pyrimidine metabolism; UMP biosynthesis via de novo pathway; (S)-dihydroorotate from bicarbonate: step 1/3. In terms of biological role, large subunit of the glutamine-dependent carbamoyl phosphate synthetase (CPSase). CPSase catalyzes the formation of carbamoyl phosphate from the ammonia moiety of glutamine, carbonate, and phosphate donated by ATP, constituting the first step of 2 biosynthetic pathways, one leading to arginine and/or urea and the other to pyrimidine nucleotides. The large subunit (synthetase) binds the substrates ammonia (free or transferred from glutamine from the small subunit), hydrogencarbonate and ATP and carries out an ATP-coupled ligase reaction, activating hydrogencarbonate by forming carboxy phosphate which reacts with ammonia to form carbamoyl phosphate. The polypeptide is Carbamoyl phosphate synthase large chain (Clostridium botulinum (strain Langeland / NCTC 10281 / Type F)).